The sequence spans 253 residues: Triosephosphate isomerase (253 aa).

Substrate is bound at residue 9–11 (NWK). The active-site Electrophile is His98. Glu170 functions as the Proton acceptor in the catalytic mechanism. Substrate-binding positions include Gly176, Ser216, and 237-238 (GG).

This sequence belongs to the triosephosphate isomerase family. In terms of assembly, homodimer.

It is found in the cytoplasm. The catalysed reaction is D-glyceraldehyde 3-phosphate = dihydroxyacetone phosphate. Its pathway is carbohydrate biosynthesis; gluconeogenesis. It participates in carbohydrate degradation; glycolysis; D-glyceraldehyde 3-phosphate from glycerone phosphate: step 1/1. Involved in the gluconeogenesis. Catalyzes stereospecifically the conversion of dihydroxyacetone phosphate (DHAP) to D-glyceraldehyde-3-phosphate (G3P). This is Triosephosphate isomerase from Amoebophilus asiaticus (strain 5a2).